The sequence spans 78 residues: Large ribosomal subunit protein bL28 (78 aa).

The interval 1–27 (MSAYCQVTGRKPSFGKSVSHSHRRTNR) is disordered.

This sequence belongs to the bacterial ribosomal protein bL28 family.

The protein is Large ribosomal subunit protein bL28 of Corynebacterium kroppenstedtii (strain DSM 44385 / JCM 11950 / CIP 105744 / CCUG 35717).